Consider the following 780-residue polypeptide: Zinc finger protein GLIS3 (780 aa).

2 stretches are compositionally biased toward polar residues: residues 80 to 92 (PSLSSSHSSQNGT) and 106 to 115 (VSGNSVSNSL). Disordered stretches follow at residues 80 to 148 (PSLS…KKRA) and 290 to 315 (PSALPLPLPPPQGPPPPYHAHPHLHH). The span at 135-148 (SATRAHSTRSKKRA) shows a compositional bias: basic residues. A compositionally biased stretch (pro residues) spans 293-308 (LPLPLPPPQGPPPPYH). The C2H2-type 1 zinc finger occupies 345-370 (HCCRWIDCSALYDQQEELVRHIEKVH). Residues 379-406 (FTCFWTGCPRRYKPFNARYKLLIHMRVH) form a C2H2-type 2; atypical zinc finger. C2H2-type zinc fingers lie at residues 412–436 (NKCTFEGCKKAFSRLENLKIHLRSH), 442–466 (YLCQHPGCQKAFSNSSDRAKHQRTH), and 472–496 (YACQIPGCTKRYTDPSSLRKHVKAH). 2 disordered regions span residues 485-512 (DPSSLRKHVKAHSSREQQARKKLRSSTE) and 527-670 (LQPA…QPNG). The Bipartite nuclear localization signal motif lies at 490–506 (RKHVKAHSSREQQARKK). The segment covering 497-512 (SSREQQARKKLRSSTE) has biased composition (basic and acidic residues). Positions 567 to 577 (HSTRSGTAAGA) are enriched in low complexity. A compositionally biased stretch (polar residues) spans 593–605 (VQGSPHNPSSQLP).

Belongs to the GLI C2H2-type zinc-finger protein family. In the embryo, expressed at high levels in the kidney and testis. In the adult, expressed at high levels in the kidney and uterus and at lower levels in the brain, lung, skeletal muscle and pancreas.

Its subcellular location is the nucleus. In terms of biological role, acts both as a repressor and activator of transcription. Binds to the consensus sequence 5'-GACCACCCAC-3'. The polypeptide is Zinc finger protein GLIS3 (Mus musculus (Mouse)).